The following is a 273-amino-acid chain: Cysteine protease S273R (273 aa).

Residues His-168 and Asn-187 contribute to the active site. Gln-226 serves as a coordination point for substrate. The Nucleophile role is filled by Cys-232.

Belongs to the peptidase C63 family.

The protein localises to the host cytoplasm. Its subcellular location is the virion. Functionally, cysteine protease that plays several role during infection including processing of the structural polyprotein or inhibition of the host immune response. Catalyzes the maturation of the pp220 and pp62 polyprotein precursors into core-shell proteins. Plays a role in the disruption of host pyroptosis via specific cleavage of gasdermin D/GSDMD. In addition, strongly decreases the host cGAS-STING signaling by targeting IKBKE via its enzymatic activity. Also impairs host FOXJ1-mediated antiviral effect via degradation of FOXJ1. The polypeptide is Cysteine protease S273R (African swine fever virus (isolate Tick/Malawi/Lil 20-1/1983) (ASFV)).